The primary structure comprises 105 residues: Large ribosomal subunit protein uL22 (105 aa).

Belongs to the universal ribosomal protein uL22 family. Part of the 50S ribosomal subunit.

Functionally, this protein binds specifically to 23S rRNA; its binding is stimulated by other ribosomal proteins, e.g. L4, L17, and L20. It is important during the early stages of 50S assembly. It makes multiple contacts with different domains of the 23S rRNA in the assembled 50S subunit and ribosome. In terms of biological role, the globular domain of the protein is located near the polypeptide exit tunnel on the outside of the subunit, while an extended beta-hairpin is found that lines the wall of the exit tunnel in the center of the 70S ribosome. The chain is Large ribosomal subunit protein uL22 from Sulfurimonas denitrificans (strain ATCC 33889 / DSM 1251) (Thiomicrospira denitrificans (strain ATCC 33889 / DSM 1251)).